Reading from the N-terminus, the 507-residue chain is ATP synthase subunit alpha, mitochondrial (507 aa).

171-178 (GDRQTGKT) serves as a coordination point for ATP.

Belongs to the ATPase alpha/beta chains family. As to quaternary structure, F-type ATPases have 2 components, CF(1) - the catalytic core - and CF(0) - the membrane proton channel. CF(1) has five subunits: alpha(3), beta(3), gamma(1), delta(1), epsilon(1). CF(0) has three main subunits: a, b and c.

It is found in the mitochondrion. The protein localises to the mitochondrion inner membrane. In terms of biological role, mitochondrial membrane ATP synthase (F(1)F(0) ATP synthase or Complex V) produces ATP from ADP in the presence of a proton gradient across the membrane which is generated by electron transport complexes of the respiratory chain. F-type ATPases consist of two structural domains, F(1) - containing the extramembraneous catalytic core, and F(0) - containing the membrane proton channel, linked together by a central stalk and a peripheral stalk. During catalysis, ATP synthesis in the catalytic domain of F(1) is coupled via a rotary mechanism of the central stalk subunits to proton translocation. Subunits alpha and beta form the catalytic core in F(1). Rotation of the central stalk against the surrounding alpha(3)beta(3) subunits leads to hydrolysis of ATP in three separate catalytic sites on the beta subunits. Subunit alpha does not bear the catalytic high-affinity ATP-binding sites. This is ATP synthase subunit alpha, mitochondrial (ATPA) from Arabidopsis thaliana (Mouse-ear cress).